The primary structure comprises 161 residues: UPF0262 protein SPOA0072 (161 aa).

A disordered region spans residues 1-21; the sequence is MTMSRISHIELDDSNLPPPTP.

This sequence belongs to the UPF0262 family.

This is UPF0262 protein SPOA0072 from Ruegeria pomeroyi (strain ATCC 700808 / DSM 15171 / DSS-3) (Silicibacter pomeroyi).